Consider the following 532-residue polypeptide: Exodeoxyribonuclease 7 large subunit (532 aa).

The segment at 497-532 (AITTGEGTPAPETAAAPKKKPAKPASSDPGNQGNLF) is disordered. Residues 499–512 (TTGEGTPAPETAAA) are compositionally biased toward low complexity.

This sequence belongs to the XseA family. As to quaternary structure, heterooligomer composed of large and small subunits.

The protein resides in the cytoplasm. The enzyme catalyses Exonucleolytic cleavage in either 5'- to 3'- or 3'- to 5'-direction to yield nucleoside 5'-phosphates.. Functionally, bidirectionally degrades single-stranded DNA into large acid-insoluble oligonucleotides, which are then degraded further into small acid-soluble oligonucleotides. This chain is Exodeoxyribonuclease 7 large subunit, found in Agrobacterium fabrum (strain C58 / ATCC 33970) (Agrobacterium tumefaciens (strain C58)).